The primary structure comprises 88 residues: Large ribosomal subunit protein bL27 (88 aa).

The disordered stretch occupies residues 1–24 (MAHKKAGGSSRNGRDSEGRRLGVK).

The protein belongs to the bacterial ribosomal protein bL27 family.

In Methylobacterium radiotolerans (strain ATCC 27329 / DSM 1819 / JCM 2831 / NBRC 15690 / NCIMB 10815 / 0-1), this protein is Large ribosomal subunit protein bL27.